Reading from the N-terminus, the 416-residue chain is Formyl-CoA:oxalate CoA-transferase (416 aa).

Residues 17–18 (QS), arginine 38, 72–75 (LNTK), 96–98 (NFH), histidine 104, and 137–140 (KAYE) each bind CoA. The active-site Nucleophile is aspartate 169. 248–250 (GGQ) serves as a coordination point for substrate. 273–275 (QEQ) lines the CoA pocket.

Belongs to the CoA-transferase III family. Frc subfamily. Homodimer.

It catalyses the reaction formyl-CoA + oxalate = oxalyl-CoA + formate. It participates in metabolic intermediate degradation; oxalate degradation; CO(2) and formate from oxalate: step 1/2. Involved in the catabolism of oxalate and in the adapatation to low pH via the induction of the oxalate-dependent acid tolerance response (ATR). Catalyzes the transfer of the CoA moiety from formyl-CoA to oxalate. This chain is Formyl-CoA:oxalate CoA-transferase, found in Escherichia coli (strain ATCC 8739 / DSM 1576 / NBRC 3972 / NCIMB 8545 / WDCM 00012 / Crooks).